Consider the following 313-residue polypeptide: Monoglyceride lipase (313 aa).

The GXSXG signature appears at 121–125; sequence GHSMG. The Nucleophile role is filled by serine 123. Catalysis depends on charge relay system residues aspartate 251 and histidine 281.

The protein belongs to the AB hydrolase superfamily. Monoacylglycerol lipase family.

The protein localises to the lipid droplet. It localises to the cytoplasm. The protein resides in the endoplasmic reticulum. It is found in the mitochondrion outer membrane. The catalysed reaction is Hydrolyzes glycerol monoesters of long-chain fatty acids.. The enzyme catalyses a fatty acid ethyl ester + H2O = ethanol + a fatty acid + H(+). It catalyses the reaction 1-(9Z-octadecenoyl)-glycerol + H2O = glycerol + (9Z)-octadecenoate + H(+). It carries out the reaction 2-(9Z-octadecenoyl)-glycerol + H2O = glycerol + (9Z)-octadecenoate + H(+). The catalysed reaction is 1-hexadecanoylglycerol + H2O = glycerol + hexadecanoate + H(+). The enzyme catalyses 2-hexadecanoylglycerol + H2O = glycerol + hexadecanoate + H(+). It catalyses the reaction ethyl hexadecanoate + H2O = ethanol + hexadecanoate + H(+). It carries out the reaction ethyl (9Z)-octadecenoate + H2O = ethanol + (9Z)-octadecenoate + H(+). The catalysed reaction is ethyl (9Z)-hexadecenoate + H2O = (9Z)-hexadecenoate + ethanol + H(+). The enzyme catalyses ethyl octadecanoate + H2O = ethanol + octadecanoate + H(+). The protein operates within glycerolipid metabolism; triacylglycerol degradation. In terms of biological role, converts monoacylglycerides (MAG) to free fatty acids and glycerol. Has a strong preference for monounsaturated monoglycerides. Required for efficient degradation of MAG, short-lived intermediates of glycerolipid metabolism which may also function as lipid signaling molecules. Controls inactivation of the signaling lipid N-palmitoylethanolamine (PEA). Involved in fatty acid ethyl ester (FAEE) catabolism. FAEEs are non-oxidative metabolites of ethanol that are transiently incorporated into lipid droplets (LDs). Their mobilization by LD-resident FAEE hydrolases facilitates a controlled metabolism of these potentially toxic lipid metabolites. This Saccharomyces cerevisiae (strain ATCC 204508 / S288c) (Baker's yeast) protein is Monoglyceride lipase (YJU3).